The sequence spans 306 residues: tRNA dimethylallyltransferase (306 aa).

Residue 14–21 (GPTAAGKS) participates in ATP binding. Substrate is bound at residue 16–21 (TAAGKS). An interaction with substrate tRNA region spans residues 39 to 42 (DSRL).

The protein belongs to the IPP transferase family. Monomer. The cofactor is Mg(2+).

It carries out the reaction adenosine(37) in tRNA + dimethylallyl diphosphate = N(6)-dimethylallyladenosine(37) in tRNA + diphosphate. In terms of biological role, catalyzes the transfer of a dimethylallyl group onto the adenine at position 37 in tRNAs that read codons beginning with uridine, leading to the formation of N6-(dimethylallyl)adenosine (i(6)A). The polypeptide is tRNA dimethylallyltransferase (Synechococcus sp. (strain ATCC 27144 / PCC 6301 / SAUG 1402/1) (Anacystis nidulans)).